A 148-amino-acid chain; its full sequence is MVCRFSYVQVVLILVVLSVIISWANACSCFPPDETRQQKCRRADFVFLGRGYVTGIQQIGSFFYLRYCFLIDRVFKDRASSLNIPCALTNVESSYCGVRFERGRRYIVSGYLTRSGNQIGACEWNERWSNVPFLTRLQLFNDPQWCLP.

A signal peptide spans 1–26 (MVCRFSYVQVVLILVVLSVIISWANA). 3 disulfides stabilise this stretch: cysteine 27–cysteine 96, cysteine 29–cysteine 122, and cysteine 40–cysteine 146. Positions 27 to 146 (CSCFPPDETR…LQLFNDPQWC (120 aa)) constitute an NTR domain.

In terms of tissue distribution, prismatic layer of shell (at protein level). Expressed primarily in the mantle with highest level in the mantle edge and lower level in the mantle pallium.

It is found in the secreted. The polypeptide is NTR domain-containing protein (Margaritifera margaritifera (Freshwater pearl mussel)).